The chain runs to 3365 residues: Probable serine/threonine-protein kinase roco9 (3365 aa).

Disordered stretches follow at residues 1–177 (MTSI…KSSK), 397–497 (ESTE…QPPQ), 944–985 (PIKK…GFLS), 1044–1098 (IHQQ…NNKI), and 1261–1301 (QNNL…ISKG). Positions 8 to 27 (FDKKSKRSNEDTGEKEETKK) are enriched in basic and acidic residues. 4 stretches are compositionally biased toward low complexity: residues 51–84 (LQQL…SLNT), 100–116 (STNS…STRS), 137–169 (SQTS…TVKT), and 397–415 (ESTE…TLEP). One can recognise a Rho-GAP domain in the interval 243 to 437 (TPLYSLIKRQ…RLPQQSSDDN (195 aa)). Positions 421 to 434 (PLSTSTQRLPQQSS) are enriched in polar residues. 5 stretches are compositionally biased toward low complexity: residues 435–445 (DDNSNNDNNNK), 457–489 (NNDN…QPKQ), 959–974 (SSPL…IPSK), 1044–1096 (IHQQ…NNNN), and 1262–1301 (NNLN…ISKG). One can recognise a Myotubularin phosphatase domain in the interval 804 to 1484 (IWDIYSPLIE…DQIILWSSFF (681 aa)). 16 LRR repeats span residues 1510–1526 (SQKL…LSYF), 1527–1549 (STLT…IILL), 1550–1572 (SNLT…LLKL), 1576–1599 (KLKL…IYTL), 1600–1622 (STLT…ISKM), 1624–1645 (QLKC…LSLC), 1646–1668 (VGLE…FFKL), 1670–1691 (SLRM…KLDD), 1697–1720 (MNEI…MFEM), 1722–1743 (SLIH…LLDN), 1744–1770 (LVNL…LFKL), 1772–1789 (VLDL…HAML), 1790–1812 (PSLK…DFNL), 1814–1835 (LLSE…IGTK), 1837–1861 (LSLT…ALLK), and 1863–1887 (LKSL…DAIL). A compositionally biased stretch (basic and acidic residues) spans 1932–1947 (SKEREKEKEKEKEKEK). Disordered regions lie at residues 1932–1963 (SKER…DKDK), 2190–2389 (NNNN…NNGS), 2507–2567 (APST…LQTP), and 2674–2704 (SNQQ…TSIN). Low complexity-rich tracts occupy residues 2190-2205 (NNNN…NNNN), 2216-2389 (SINN…NNGS), 2522-2567 (NNTS…LQTP), and 2676-2688 (QQQQ…STQH). In terms of domain architecture, Protein kinase spans 3008 to 3269 (ELDPNPIGEG…KKLEEIELIL (262 aa)). ATP contacts are provided by residues 3014–3022 (IGEGGTATV) and Lys-3035. Asp-3132 serves as the catalytic Proton acceptor. A compositionally biased stretch (low complexity) spans 3311–3333 (QQQKQQQLQQQKQSPKQLQQQKP). The interval 3311-3365 (QQQKQQQLQQQKQSPKQLQQQKPLPTPPKQLSNNDSTPTKPLDDSSDSSSEDSNN) is disordered. Residues 3354-3365 (DSSDSSSEDSNN) are compositionally biased toward acidic residues.

The protein belongs to the protein kinase superfamily. TKL Ser/Thr protein kinase family. ROCO subfamily.

It catalyses the reaction L-seryl-[protein] + ATP = O-phospho-L-seryl-[protein] + ADP + H(+). It carries out the reaction L-threonyl-[protein] + ATP = O-phospho-L-threonyl-[protein] + ADP + H(+). This Dictyostelium discoideum (Social amoeba) protein is Probable serine/threonine-protein kinase roco9 (roco9).